Consider the following 157-residue polypeptide: Transcription elongation factor GreA (157 aa).

Belongs to the GreA/GreB family.

In terms of biological role, necessary for efficient RNA polymerase transcription elongation past template-encoded arresting sites. The arresting sites in DNA have the property of trapping a certain fraction of elongating RNA polymerases that pass through, resulting in locked ternary complexes. Cleavage of the nascent transcript by cleavage factors such as GreA or GreB allows the resumption of elongation from the new 3'terminus. GreA releases sequences of 2 to 3 nucleotides. In Azorhizobium caulinodans (strain ATCC 43989 / DSM 5975 / JCM 20966 / LMG 6465 / NBRC 14845 / NCIMB 13405 / ORS 571), this protein is Transcription elongation factor GreA.